Consider the following 346-residue polypeptide: tRNA N6-adenosine threonylcarbamoyltransferase (346 aa).

Fe cation is bound by residues His111 and His115. Residues 134 to 138 (LVSGG), Asp167, Gly180, and Asn279 each bind substrate. Asp307 contributes to the Fe cation binding site.

Belongs to the KAE1 / TsaD family. Fe(2+) serves as cofactor.

It is found in the cytoplasm. The catalysed reaction is L-threonylcarbamoyladenylate + adenosine(37) in tRNA = N(6)-L-threonylcarbamoyladenosine(37) in tRNA + AMP + H(+). Functionally, required for the formation of a threonylcarbamoyl group on adenosine at position 37 (t(6)A37) in tRNAs that read codons beginning with adenine. Is involved in the transfer of the threonylcarbamoyl moiety of threonylcarbamoyl-AMP (TC-AMP) to the N6 group of A37, together with TsaE and TsaB. TsaD likely plays a direct catalytic role in this reaction. The sequence is that of tRNA N6-adenosine threonylcarbamoyltransferase from Burkholderia pseudomallei (strain K96243).